Here is a 505-residue protein sequence, read N- to C-terminus: MLTPRVLRALGWTGLFFLLLSPSNVLGASLSRDLEHPILSFDPSNISINGAPLTEVPHAPSTESVSTNSESTNEHTITETTGKNAYIHNNASTDKQNANDTHKTPNILCDTEEVFVFLNETGRFVCTLKVDPPSDSEWSNFVLDLIFNPIEYHANEKNVEAARIAGLYGVPGSDYAYPRQSELISSIRRDPQGTFWTSPSPHGNKYFIWINKTTNTMGVEIRNVDYADNGYMQVIMRDHFNRPLIDKHIYIRVCQRPASVDVLAPPVLSGENYKASCIVRHFYPPGSVYVSWRQNGNIATPRKDRDGSFWWFESGRGATLVSTITLGNSGIDFPPKISCLVAWKQGDMISTTNATAIPTVYHHPRLSLAFKDGYAICTIECVPSEITVRWLVHDEAQPNTTYNTVVTGLCRTIDRHRNLLSRIPVWDNWTKTKYTCRLIGYPFDEDKFQDSEYYDATPSARGTPMVITVNGSFGIGCNFRVGDNHDCPMFIHSTRKIFDYNLIVM.

A signal peptide spans 1–27; sequence MLTPRVLRALGWTGLFFLLLSPSNVLG. Over 28–464 the chain is Virion surface; that stretch reads ASLSRDLEHP…DATPSARGTP (437 aa). Asn45 carries an N-linked (GlcNAc...) asparagine; by host glycan. Residues 51–85 are disordered; the sequence is APLTEVPHAPSTESVSTNSESTNEHTITETTGKNA. A compositionally biased stretch (low complexity) spans 61–71; sequence STESVSTNSES. N-linked (GlcNAc...) asparagine; by host glycans are attached at residues Asn90, Asn99, Asn119, Asn211, Asn353, Asn399, and Asn428. The Ig-like domain occupies 257–355; sequence PASVDVLAPP…GDMISTTNAT (99 aa). A helical membrane pass occupies residues 465–491; it reads MVITVNGSFGIGCNFRVGDNHDCPMFI. At 492 to 505 the chain is on the cytoplasmic side; that stretch reads HSTRKIFDYNLIVM.

This sequence belongs to the herpesviridae glycoprotein C family.

It is found in the secreted. It localises to the host cell membrane. May play an immunoevasive role in the pathogenesis of Marek's disease. It is a candidate for causing the early-stage immunosuppression that occurs after MDHV infection. This is Envelope glycoprotein C homolog (gC) from Gallid herpesvirus 2 (strain GA) (GaHV-2).